An 887-amino-acid polypeptide reads, in one-letter code: PAN2-PAN3 deadenylation complex subunit Pan3 (887 aa).

Residues 49–77 (GVKLKYCRYYAKDKTCFYGEECQFLHEDP) form a C3H1-type zinc finger. Disordered regions lie at residues 111-139 (GGGAGPPAGPKKPELGVPGAATAGGGLDG), 280-307 (ENNLQTPNPTASEFIPKGGSTSRLSNVS), and 321-393 (PSMG…GQVI). The necessary and sufficient for interaction with PABPC1 but not needed for interaction with PAN2 stretch occupies residues 147–498 (MDGGALTDAS…PPPNRIQKSS (352 aa)). Composition is skewed to polar residues over residues 281–290 (NNLQTPNPTA) and 298–307 (GSTSRLSNVS). The PABPC-interacting motif-2 (PAM-2) motif lies at 284–299 (QTPNPTASEFIPKGGS). A phosphoserine mark is found at Ser354 and Ser361. Residues 463–750 (QIDQADMPAV…SVNDIMPMIG (288 aa)) form a pseudokinase domain region. ATP contacts are provided by residues Arg521, 570–577 (DFHAGGET), and 644–645 (TK). A knob domain region spans residues 789 to 887 (TINERPEFQK…ELIAAANGQL (99 aa)).

Belongs to the protein kinase superfamily. PAN3 family. In terms of assembly, homodimer. Forms a heterotrimer with a catalytic subunit PAN2 to form the poly(A)-nuclease (PAN) deadenylation complex. Interacts (via PAM-2 motif) with poly(A)-binding protein PABPC1 (via PABC domain), conferring substrate specificity of the enzyme complex. Interacts with the GW182 family proteins TNRC6A, TNRC6B and TNRC6C. Interacts with YTHDF3. As to quaternary structure, interacts with PAN2. Interacts (via N-terminus) with PABPC1 at lower efficiency than isoform 3. Interacts with PAN2. Interacts (via N-terminus) with PABPC1 at higher efficiency than isoform 1.

Its subcellular location is the cytoplasm. It is found in the P-body. It localises to the nucleus. Functionally, regulatory subunit of the poly(A)-nuclease (PAN) deadenylation complex, one of two cytoplasmic mRNA deadenylases involved in general and miRNA-mediated mRNA turnover. PAN specifically shortens poly(A) tails of RNA and the activity is stimulated by poly(A)-binding protein (PABP). PAN deadenylation is followed by rapid degradation of the shortened mRNA tails by the CCR4-NOT complex. Deadenylated mRNAs are then degraded by two alternative mechanisms, namely exosome-mediated 3'-5' exonucleolytic degradation, or deadenylation-dependent mRNA decapping and subsequent 5'-3' exonucleolytic degradation by XRN1. PAN3 acts as a regulator for PAN activity, recruiting the catalytic subunit PAN2 to mRNA via its interaction with RNA and PABP, and to miRNA targets via its interaction with GW182 family proteins. Decreases PAN2-mediated deadenylation, possibly by preventing progression into the second CCR4-NOT mediated stage of biphasic deadenylation. Has a significant effect on mRNA stability, generally stabilizing a subset of the transcriptome. Stabilizes mRNAs degraded by the AU-rich element (ARE)-mediated mRNA decay pathway but promotes degradation of mRNAs by the microRNA-mediated pathway. Its activity influences mRNP remodeling, specifically reducing formation of a subset of P-bodies containing GW220, an isoform of TNRC6A. In terms of biological role, enhances PAN2 deadenylase activity and has an extensive effect on mRNA stability, generally enhancing mRNA decay across the transcriptome by multiple pathways, including the AU-rich element (ARE)-mediated pathway, microRNA-mediated pathway and the nonsense-mediated pathway (NMD). Its activity is required for efficient P-body formation. May be involved in regulating mRNAs of genes involved in cell cycle progression and cell proliferation. In Mus musculus (Mouse), this protein is PAN2-PAN3 deadenylation complex subunit Pan3.